We begin with the raw amino-acid sequence, 211 residues long: Thiamine-phosphate synthase (211 aa).

4-amino-2-methyl-5-(diphosphooxymethyl)pyrimidine contacts are provided by residues Q41–K45 and N73. Mg(2+)-binding residues include D74 and D93. T112 lines the 4-amino-2-methyl-5-(diphosphooxymethyl)pyrimidine pocket. S139–T141 is a 2-[(2R,5Z)-2-carboxy-4-methylthiazol-5(2H)-ylidene]ethyl phosphate binding site. K142 lines the 4-amino-2-methyl-5-(diphosphooxymethyl)pyrimidine pocket. 2-[(2R,5Z)-2-carboxy-4-methylthiazol-5(2H)-ylidene]ethyl phosphate is bound by residues G169 and V189–S190.

This sequence belongs to the thiamine-phosphate synthase family. It depends on Mg(2+) as a cofactor.

The catalysed reaction is 2-[(2R,5Z)-2-carboxy-4-methylthiazol-5(2H)-ylidene]ethyl phosphate + 4-amino-2-methyl-5-(diphosphooxymethyl)pyrimidine + 2 H(+) = thiamine phosphate + CO2 + diphosphate. It carries out the reaction 2-(2-carboxy-4-methylthiazol-5-yl)ethyl phosphate + 4-amino-2-methyl-5-(diphosphooxymethyl)pyrimidine + 2 H(+) = thiamine phosphate + CO2 + diphosphate. It catalyses the reaction 4-methyl-5-(2-phosphooxyethyl)-thiazole + 4-amino-2-methyl-5-(diphosphooxymethyl)pyrimidine + H(+) = thiamine phosphate + diphosphate. It participates in cofactor biosynthesis; thiamine diphosphate biosynthesis; thiamine phosphate from 4-amino-2-methyl-5-diphosphomethylpyrimidine and 4-methyl-5-(2-phosphoethyl)-thiazole: step 1/1. In terms of biological role, condenses 4-methyl-5-(beta-hydroxyethyl)thiazole monophosphate (THZ-P) and 2-methyl-4-amino-5-hydroxymethyl pyrimidine pyrophosphate (HMP-PP) to form thiamine monophosphate (TMP). The sequence is that of Thiamine-phosphate synthase from Thioalkalivibrio sulfidiphilus (strain HL-EbGR7).